A 437-amino-acid chain; its full sequence is GTPase Era, mitochondrial (437 aa).

A mitochondrion-targeting transit peptide spans 1-43 (MAAPSWRGARLVQSVLRVWQVGPHVARERVIPFSSLLGFQRRC). An Era-type G domain is found at 112–330 (RVLRVVLLGA…QYLLTQAQPG (219 aa)). Residues 120–127 (GAPNAGKS) form a G1 region. Residue 120-127 (GAPNAGKS) coordinates GTP. Residues 146–150 (HTTRC) are G2. Residues 167–170 (DTPG) form a G3 region. 167–171 (DTPGI) provides a ligand contact to GTP. S173 bears the Phosphoserine mark. 236-239 (NKVD) serves as a coordination point for GTP. Residues 236–239 (NKVD) form a G4 region. Residues 271 to 290 (HSHPGTHCPSPAVKDPNTQS) form a disordered region. A G5 region spans residues 308–310 (LSA). Residues 360–437 (LPQEVPYNVQ…DIRLSVKLLK (78 aa)) form the KH type-2 domain.

It belongs to the TRAFAC class TrmE-Era-EngA-EngB-Septin-like GTPase superfamily. Era GTPase family.

It is found in the mitochondrion matrix. The protein localises to the mitochondrion inner membrane. Functionally, probable GTPase that plays a role in the mitochondrial ribosomal small subunit assembly. Specifically binds the 12S mitochondrial rRNA (12S mt-rRNA) to a 33 nucleotide section delineating the 3' terminal stem-loop region. May act as a chaperone that protects the 12S mt-rRNA on the 28S mitoribosomal subunit during ribosomal small subunit assembly. The polypeptide is GTPase Era, mitochondrial (ERAL1) (Homo sapiens (Human)).